Here is a 409-residue protein sequence, read N- to C-terminus: Nucleoprotein (409 aa).

2 disordered regions span residues methionine 1 to lysine 64 and arginine 167 to aspartate 197. Positions glycine 30–leucine 161 are RNA-binding. Residues glycine 32–aspartate 157 form the CoV N NTD domain. The span at glutamate 176 to aspartate 197 shows a compositional bias: basic and acidic residues. Serine 192 is modified (phosphoserine; by host). A CoV N CTD domain is found at serine 217 to proline 333. The interval lysine 228–aspartate 335 is dimerization. Cysteine 322 and cysteine 325 form a disulfide bridge. The interval aspartate 327 to isoleucine 409 is disordered. A compositionally biased stretch (basic and acidic residues) spans arginine 332–asparagine 349. Position 374 is a phosphothreonine; by host (threonine 374).

It belongs to the gammacoronavirus nucleocapsid protein family. Homooligomer. Both monomeric and oligomeric forms interact with RNA. Interacts with protein M. Interacts with NSP3; this interaction serves to tether the genome to the newly translated replicase-transcriptase complex at a very early stage of infection. In terms of processing, ADP-ribosylated. The ADP-ribosylation is retained in the virion during infection. Phosphorylated on serine and threonine residues.

It is found in the virion. The protein resides in the host endoplasmic reticulum-Golgi intermediate compartment. Its subcellular location is the host Golgi apparatus. Functionally, packages the positive strand viral genome RNA into a helical ribonucleocapsid (RNP) and plays a fundamental role during virion assembly through its interactions with the viral genome and membrane protein M. Plays an important role in enhancing the efficiency of subgenomic viral RNA transcription as well as viral replication. The polypeptide is Nucleoprotein (Gallus gallus (Chicken)).